The chain runs to 427 residues: Adenylosuccinate synthetase (427 aa).

Residues 13 to 19 and 41 to 43 each bind GTP; these read GDEGKGK and GHT. D14 (proton acceptor) is an active-site residue. Mg(2+)-binding residues include D14 and G41. IMP-binding positions include 14-17, 39-42, T129, R143, Q224, T239, and R303; these read DEGK and NAGH. The Proton donor role is filled by H42. The segment at 117–137 is disordered; that stretch reads QEKQRGEESLGTTKRGIGPAY. 299–305 is a binding site for substrate; the sequence is TTTGRPR. GTP contacts are provided by residues R305, 331–333, and 414–416; these read KLD and GTG.

The protein belongs to the adenylosuccinate synthetase family. As to quaternary structure, homodimer. Mg(2+) is required as a cofactor.

Its subcellular location is the cytoplasm. It catalyses the reaction IMP + L-aspartate + GTP = N(6)-(1,2-dicarboxyethyl)-AMP + GDP + phosphate + 2 H(+). It participates in purine metabolism; AMP biosynthesis via de novo pathway; AMP from IMP: step 1/2. Plays an important role in the de novo pathway of purine nucleotide biosynthesis. Catalyzes the first committed step in the biosynthesis of AMP from IMP. This Caldicellulosiruptor saccharolyticus (strain ATCC 43494 / DSM 8903 / Tp8T 6331) protein is Adenylosuccinate synthetase.